Consider the following 342-residue polypeptide: MTIQEELEAIKQQFSCDVSLAHSSKDLFDVKVKYLGKKGIFRGFADQLRKCPIEQKATVGASINACKQYVEEVLLERGKAVLAKEEAEEFLKEKIDISLPGSEEAALGGKHVIKKVLDDVVDIFVRFGFCVREAPNIESEKNNFSLLNFEGDHPARQMQDTFYLDPTTVLRTHTSNVQSRELARNKPPVRIVAPGECFRNEDVSARSHVIFHQVEAFCVDKDISFSDLTSMLAGFYHIFFGRKVELRFRHSYFPFVEPGIEVDISCECHGAGCSLCKHSGWLEVAGAGMIHPNVLRKASIDPEEYSGYALGMGIERLAMLKYGISDIRLFSENDLRFLRQFS.

Glu-257 serves as a coordination point for Mg(2+).

The protein belongs to the class-II aminoacyl-tRNA synthetase family. Phe-tRNA synthetase alpha subunit type 1 subfamily. As to quaternary structure, tetramer of two alpha and two beta subunits. The cofactor is Mg(2+).

The protein resides in the cytoplasm. It catalyses the reaction tRNA(Phe) + L-phenylalanine + ATP = L-phenylalanyl-tRNA(Phe) + AMP + diphosphate + H(+). This Chlamydia trachomatis serovar A (strain ATCC VR-571B / DSM 19440 / HAR-13) protein is Phenylalanine--tRNA ligase alpha subunit.